The chain runs to 189 residues: Elongation factor P (189 aa).

Lys34 carries the post-translational modification N6-(3,6-diaminohexanoyl)-5-hydroxylysine.

Belongs to the elongation factor P family. In terms of processing, may be beta-lysylated on the epsilon-amino group of Lys-34 by the combined action of EpmA and EpmB, and then hydroxylated on the C5 position of the same residue by EpmC (if this protein is present). Lysylation is critical for the stimulatory effect of EF-P on peptide-bond formation. The lysylation moiety may extend toward the peptidyltransferase center and stabilize the terminal 3-CCA end of the tRNA. Hydroxylation of the C5 position on Lys-34 may allow additional potential stabilizing hydrogen-bond interactions with the P-tRNA.

It localises to the cytoplasm. It functions in the pathway protein biosynthesis; polypeptide chain elongation. Functionally, involved in peptide bond synthesis. Alleviates ribosome stalling that occurs when 3 or more consecutive Pro residues or the sequence PPG is present in a protein, possibly by augmenting the peptidyl transferase activity of the ribosome. Modification of Lys-34 is required for alleviation. This is Elongation factor P from Nitrosococcus oceani (strain ATCC 19707 / BCRC 17464 / JCM 30415 / NCIMB 11848 / C-107).